A 423-amino-acid polypeptide reads, in one-letter code: D-tagatose-1,6-bisphosphate aldolase subunit GatZ (423 aa).

The protein belongs to the GatZ/KbaZ family. GatZ subfamily. In terms of assembly, forms a complex with GatY.

The protein operates within carbohydrate metabolism; D-tagatose 6-phosphate degradation; D-glyceraldehyde 3-phosphate and glycerone phosphate from D-tagatose 6-phosphate: step 2/2. Functionally, component of the tagatose-1,6-bisphosphate aldolase GatYZ that is required for full activity and stability of the Y subunit. Could have a chaperone-like function for the proper and stable folding of GatY. When expressed alone, GatZ does not show any aldolase activity. Is involved in the catabolism of galactitol. The sequence is that of D-tagatose-1,6-bisphosphate aldolase subunit GatZ from Salmonella newport (strain SL254).